A 144-amino-acid polypeptide reads, in one-letter code: uncharacterized protein (144 aa).

A helical membrane pass occupies residues 25-47 (LTLLDGCCVALVLALTAWSGFFV).

It is found in the membrane. This is an uncharacterized protein from Treponema pallidum (strain Nichols).